A 135-amino-acid chain; its full sequence is Ig heavy chain V region XIG14 (135 aa).

The first 18 residues, 1 to 18 (DFIIFFIFMFFSPSCILS), serve as a signal peptide directing secretion. The 109-residue stretch at 20-128 (TLQESGPGTV…GYNFDYWGQG (109 aa)) folds into the Ig-like domain.

This Xenopus laevis (African clawed frog) protein is Ig heavy chain V region XIG14.